The chain runs to 208 residues: V-type ATP synthase subunit D (208 aa).

The protein belongs to the V-ATPase D subunit family.

In terms of biological role, produces ATP from ADP in the presence of a proton gradient across the membrane. The polypeptide is V-type ATP synthase subunit D (Streptococcus pyogenes serotype M6 (strain ATCC BAA-946 / MGAS10394)).